A 39-amino-acid chain; its full sequence is Potassium channel toxin alpha-KTx 2.9 (39 aa).

3 disulfides stabilise this stretch: Cys7–Cys29, Cys13–Cys34, and Cys17–Cys36. Residue Asn39 is modified to Asparagine amide.

The protein belongs to the short scorpion toxin superfamily. Potassium channel inhibitor family. Alpha-KTx 02 subfamily. As to expression, expressed by the venom gland.

Its subcellular location is the secreted. Blocks Kv1.3/KCNA3 voltage-gated potassium channels of human T-lymphocytes (Kd=0.25 nM). This is Potassium channel toxin alpha-KTx 2.9 from Centruroides elegans (Bark scorpion).